The chain runs to 299 residues: Sugar transporter SWEET1 (299 aa).

The MtN3/slv 1 domain occupies 7-91 (QVLSISAITT…CVFFLIYSLP (85 aa)). Helical transmembrane passes span 8 to 28 (VLSI…IPIC), 36 to 56 (AVGD…SFWL), 67 to 87 (MIIV…FFLI), 95 to 115 (FTCQ…WIAL), 124 to 144 (VICM…LGVV), 155 to 175 (LPMC…GNLV), and 180 to 200 (IIIP…LFVV). The MtN3/slv 2 domain occupies 121–205 (YLGVICMTFN…ALFVVLPIRE (85 aa)). A disordered region spans residues 230 to 299 (RGDCIVSSPP…DPDLSSIQSP (70 aa)). Basic and acidic residues predominate over residues 247–261 (NETRSDVEDKFDKLM). The span at 276-299 (SMGSPPSYKSRSSSDPDLSSIQSP) shows a compositional bias: low complexity.

This sequence belongs to the SWEET sugar transporter family.

Its subcellular location is the golgi apparatus membrane. It is found in the cell membrane. Functionally, mediates both low-affinity uptake and efflux of sugar across the membrane. This Caenorhabditis elegans protein is Sugar transporter SWEET1 (swt-1).